The sequence spans 476 residues: MKRVLVLLLALAFGHALERGRDYEKDKVCQELSTLGKDDFRSLSLILYSRKFPSSTFEQVSQLVKEVVSLTEECCAEGADPNCYDTRTSELSIKSCESDAPFPVHPGTSECCTKEGLERKLCMAALSHQPQEFPAYVEPTNDEICEAFRKDPKGFADQFLFEYSSNYGQAPLPLLVGYTKSYLSMVGSCCTSAKPTVCFLKERLQMKQLLLLTTMSNRVCSQYAAYGKEKSRMSHLIKLAQKVPTANLEDVLPLAEDLTEILSRCCKSTSEDCMARELPEHTLKICGNLSKKNSKFEECCYETTPMGIFMCSYFMPTAEPLQLPAIKLPTSKDLCGQSATQAMDQYTFELSRRTQVPEVFLSKVLDTTLKTLRECCDTQDSVSCFSTQSPLMKRQLTSFIEKGQEMCADYSENTFTEYKKKLAERLRTKMPNASPEELADMVAKHSDFASKCCSINSPPRYCSSQIDAEMRDILQS.

The first 16 residues, methionine 1–alanine 16, serve as a signal peptide directing secretion. 3 consecutive Albumin domains span residues leucine 17–glutamine 208, leucine 209–arginine 394, and glutamine 395–serine 476. Cystine bridges form between cysteine 29–cysteine 75, cysteine 74–cysteine 83, cysteine 96–cysteine 112, cysteine 111–cysteine 122, cysteine 145–cysteine 190, cysteine 189–cysteine 198, cysteine 220–cysteine 266, cysteine 265–cysteine 273, cysteine 286–cysteine 300, cysteine 299–cysteine 311, cysteine 335–cysteine 376, cysteine 375–cysteine 384, cysteine 407–cysteine 453, and cysteine 452–cysteine 462. Asparagine 288 is a glycosylation site (N-linked (GlcNAc...) asparagine). Position 434 is a phosphoserine (serine 434).

Belongs to the ALB/AFP/VDB family. In terms of assembly, associates with membrane-bound immunoglobulin on the surface of B-lymphocytes and with IgG Fc receptor on the membranes of T-lymphocytes. Interacts with LRP2; the interaction is required for renal uptake of GC in complex with 25-hydroxyvitamin D3.

The protein localises to the secreted. In terms of biological role, involved in vitamin D transport and storage, scavenging of extracellular G-actin, enhancement of the chemotactic activity of C5 alpha for neutrophils in inflammation and macrophage activation. The polypeptide is Vitamin D-binding protein (Gc) (Rattus norvegicus (Rat)).